The chain runs to 266 residues: MAATNNVDPMHQFTVEPLHGLHIGKYDISFTNSALWMVIAMAALAIFMAGGRRKALIPGRWQMAVEVMTRFVNDMVSTNIGPKGRPFTPLIFTLFMFILFANLLGLVPLFGFLPGAEPFTSTSHVTVTATLAAIAFGTVLVVGFTRHGLGFFKLFVPHGTPMALIWLIPGIEAFSFILRPFSLALRLFVAMTAGHVLLEVLANFIVNPPVQSASPAFLAGYYTLVGIPTFLLMIGISALEFLVCAIQAYVFALLTSLYLNDAINLH.

Helical transmembrane passes span 28–48 (ISFTNSALWMVIAMAALAIFM), 90–110 (LIFTLFMFILFANLLGLVPLF), 125–145 (VTVTATLAAIAFGTVLVVGFT), 158–178 (HGTPMALIWLIPGIEAFSFIL), 187–207 (LFVAMTAGHVLLEVLANFIVN), 216–236 (AFLAGYYTLVGIPTFLLMIGI), and 239–259 (LEFLVCAIQAYVFALLTSLYL).

It belongs to the ATPase A chain family. In terms of assembly, F-type ATPases have 2 components, CF(1) - the catalytic core - and CF(0) - the membrane proton channel. CF(1) has five subunits: alpha(3), beta(3), gamma(1), delta(1), epsilon(1). CF(0) has three main subunits: a(1), b(2) and c(9-12). The alpha and beta chains form an alternating ring which encloses part of the gamma chain. CF(1) is attached to CF(0) by a central stalk formed by the gamma and epsilon chains, while a peripheral stalk is formed by the delta and b chains.

It is found in the cell inner membrane. Key component of the proton channel; it plays a direct role in the translocation of protons across the membrane. This chain is ATP synthase subunit a, found in Zymomonas mobilis subsp. mobilis (strain ATCC 31821 / ZM4 / CP4).